A 327-amino-acid polypeptide reads, in one-letter code: Spermidine/putrescine import ATP-binding protein PotA (327 aa).

The region spanning Ile5–Ile235 is the ABC transporter domain. Gly37–Thr44 provides a ligand contact to ATP.

It belongs to the ABC transporter superfamily. Spermidine/putrescine importer (TC 3.A.1.11.1) family. In terms of assembly, the complex is composed of two ATP-binding proteins (PotA), two transmembrane proteins (PotB and PotC) and a solute-binding protein (PotD).

The protein resides in the cell membrane. The enzyme catalyses ATP + H2O + polyamine-[polyamine-binding protein]Side 1 = ADP + phosphate + polyamineSide 2 + [polyamine-binding protein]Side 1.. In terms of biological role, part of the ABC transporter complex PotABCD involved in spermidine/putrescine import. Responsible for energy coupling to the transport system. The protein is Spermidine/putrescine import ATP-binding protein PotA of Bacillus anthracis.